The following is a 224-amino-acid chain: Probable proteasome subunit beta type-4 (224 aa).

This sequence belongs to the peptidase T1B family. As to quaternary structure, the 26S proteasome consists of a 20S proteasome core and two 19S regulatory subunits. The 20S proteasome core is composed of 28 subunits that are arranged in four stacked rings, resulting in a barrel-shaped structure. The two end rings are each formed by seven alpha subunits, and the two central rings are each formed by seven beta subunits. The catalytic chamber with the active sites is on the inside of the barrel.

It is found in the cytoplasm. The protein localises to the nucleus. Its function is as follows. Non-catalytic component of the proteasome, a multicatalytic proteinase complex which is characterized by its ability to cleave peptides with Arg, Phe, Tyr, Leu, and Glu adjacent to the leaving group at neutral or slightly basic pH. The proteasome has an ATP-dependent proteolytic activity. The chain is Probable proteasome subunit beta type-4 (CPR1) from Cryptococcus neoformans var. neoformans serotype D (strain B-3501A) (Filobasidiella neoformans).